The chain runs to 628 residues: EF-hand calcium-binding domain-containing protein 7 (628 aa).

Polar residues predominate over residues 1-22 (MASNPGSDAALGTQNPLLSGSP). The segment at 1–24 (MASNPGSDAALGTQNPLLSGSPRT) is disordered. EF-hand domains are found at residues 102-137 (TSKA…RGEK) and 138-173 (MTQE…TSEQ). Residues 192 to 231 (QFGSHMEGSPERGPSPAPKPSPRVIRKNDQETFSSKGDTS) form a disordered region. 2 positions are modified to phosphoserine: serine 200 and serine 212. A compositionally biased stretch (polar residues) spans 222 to 231 (ETFSSKGDTS). An EF-hand 3 domain is found at 402–437 (EFRSTLSEIFEVIDLDGNGLISLEEYNFFELRTSGE). Ca(2+)-binding residues include aspartate 415, aspartate 417, asparagine 419, and glutamate 426.

As to quaternary structure, component of the EvC complex composed of EFCAB7, IQCE, EVC2 and EVC; built from two subcomplexes, EVC2:EVC and EFCAB7:IQCE. Interacts (via EF-hand 1 and 2) with IQCE (via N-terminus); this interaction anchors the EVC-EVC2 complex in a signaling microdomain at the base of cilia and stimulates the Hedgehog (Hh) pathway. Interacts with EVC2 (via N-terminal end). Interacts with EVC.

It localises to the cell projection. It is found in the cilium membrane. In terms of biological role, component of the EvC complex that positively regulates ciliary Hedgehog (Hh) signaling. Required for the localization of the EVC2:EVC subcomplex at the base of primary cilia. This chain is EF-hand calcium-binding domain-containing protein 7 (Efcab7), found in Mus musculus (Mouse).